Consider the following 276-residue polypeptide: Dermonecrotic toxin LlSicTox-alphaIV2ii (276 aa).

His-5 is a catalytic residue. Mg(2+)-binding residues include Glu-25 and Asp-27. The active-site Nucleophile is His-41. Cystine bridges form between Cys-45/Cys-51 and Cys-47/Cys-193. Asp-85 is a binding site for Mg(2+).

The protein belongs to the arthropod phospholipase D family. Class II subfamily. Mg(2+) is required as a cofactor. As to expression, expressed by the venom gland.

It localises to the secreted. The catalysed reaction is an N-(acyl)-sphingosylphosphocholine = an N-(acyl)-sphingosyl-1,3-cyclic phosphate + choline. It carries out the reaction an N-(acyl)-sphingosylphosphoethanolamine = an N-(acyl)-sphingosyl-1,3-cyclic phosphate + ethanolamine. The enzyme catalyses a 1-acyl-sn-glycero-3-phosphocholine = a 1-acyl-sn-glycero-2,3-cyclic phosphate + choline. It catalyses the reaction a 1-acyl-sn-glycero-3-phosphoethanolamine = a 1-acyl-sn-glycero-2,3-cyclic phosphate + ethanolamine. Dermonecrotic toxins cleave the phosphodiester linkage between the phosphate and headgroup of certain phospholipids (sphingolipid and lysolipid substrates), forming an alcohol (often choline) and a cyclic phosphate. This toxin acts on sphingomyelin (SM). It may also act on ceramide phosphoethanolamine (CPE), lysophosphatidylcholine (LPC) and lysophosphatidylethanolamine (LPE), but not on lysophosphatidylserine (LPS), and lysophosphatidylglycerol (LPG). It acts by transphosphatidylation, releasing exclusively cyclic phosphate products as second products. Induces dermonecrosis, hemolysis, increased vascular permeability, edema, inflammatory response, and platelet aggregation. The polypeptide is Dermonecrotic toxin LlSicTox-alphaIV2ii (Loxosceles laeta (South American recluse spider)).